The following is a 526-amino-acid chain: MDIYAVAVGRVGVELDAAQLERVRATHLRVQGWGMEKYPMYGVNTGFGELINVIIPPQFKSDLQHNLLRSHAAGGGEPFPDEVVRAIMTVRINCLMKGYSGISPEALQLLATMLNRGIHPVIPMQGSLGASGDLAPLSHMALPLIGDGHVRKNGVTRPTMEVFQEEGLTPLKLGFKEGLALVNGTSAMTGAASLALYRARHLLRLSLLASADIVQAMNASTRPFSHTGNAVKNHPGQVVIARLMRDLTEGTGLMRDHQDIMRAISERTSHSNDVEETEIYLQNAYSLRCMPQVLGVVLETLQMCQRFIEEEANSVNDNPVILDTPAETYHGANFHGQYVAMACDYLSIAVAEMGVLAERQLNRLLDPHINKPLPGFLAHAKTGLFCGFEGGQYLATSIASENLDLAAPSSIKSIPSNGQNQDIVSMGLIAARKTLALCENVGTILSVLMAALNQASHFTEAAKYSAPIRSIHEKLGKVAPRYEDERPMSTVIAQVRGVLLQEQGLALAQSLVNLDLTPDLSLEPRA.

Catalysis depends on Y41, which acts as the Proton donor/acceptor. H71 is a binding site for substrate. The segment at residues 130-132 is a cross-link (5-imidazolinone (Ala-Gly)); that stretch reads ASG. S131 carries the post-translational modification 2,3-didehydroalanine (Ser). N183 and R288 together coordinate substrate.

This sequence belongs to the TAL/TAM family. As to quaternary structure, homotetramer; dimer of dimers. Contains an active site 4-methylidene-imidazol-5-one (MIO), which is formed autocatalytically by cyclization and dehydration of residues Ala-Ser-Gly.

The catalysed reaction is L-tyrosine = 3-amino-3-(4-hydroxyphenyl)propanoate. It carries out the reaction L-tyrosine = (E)-4-coumarate + NH4(+). Functionally, has aminomutase and, to a much lesser extent, ammonia-lyase activity. Primarily, catalyzes the rearrangement of L-tyrosine to S-beta-tyrosine, which is probably incorporated into secondary metabolite myxovalargin. The aminomutase activity exclusively produces S-beta-tyrosine. This chain is Tyrosine 2,3-aminomutase, found in Myxococcus sp. (strain Mx-B0).